A 245-amino-acid chain; its full sequence is MKIDYLTLFPEMFDGVLNHSILKRAQDKEIISVNTVNFRDYAINKHNQVDDYPFGGGQGMVLKPEPVFNAMKDLQRTDQTRVILMCPQGRPFSQEIAQELSEAEHIVFICGHYEGYDERIRTHLVTDEISIGDYVLTGGELPAMTMTDAIVRLIPGVLGNQQSHQDDSFSDGLLEFPQYTRPREFENMTVPDVLLSGNHANIEQWRHEQKLIRTYHKRPDLLDRYPLTEDDEKFIESYKKQLKNN.

S-adenosyl-L-methionine contacts are provided by residues G111 and 131-136 (IGDYVL).

This sequence belongs to the RNA methyltransferase TrmD family. Homodimer.

Its subcellular location is the cytoplasm. It catalyses the reaction guanosine(37) in tRNA + S-adenosyl-L-methionine = N(1)-methylguanosine(37) in tRNA + S-adenosyl-L-homocysteine + H(+). In terms of biological role, specifically methylates guanosine-37 in various tRNAs. This Staphylococcus haemolyticus (strain JCSC1435) protein is tRNA (guanine-N(1)-)-methyltransferase.